We begin with the raw amino-acid sequence, 569 residues long: Urease subunit alpha (569 aa).

The region spanning 131–569 (GGFDSHIHFI…LPMAQRYFLF (439 aa)) is the Urease domain. His-136, His-138, and Lys-219 together coordinate Ni(2+). Lys-219 is subject to N6-carboxylysine. Residue His-221 coordinates substrate. His-248 and His-274 together coordinate Ni(2+). The active-site Proton donor is the His-322. Asp-362 lines the Ni(2+) pocket.

It belongs to the metallo-dependent hydrolases superfamily. Urease alpha subunit family. Heterotrimer of UreA (gamma), UreB (beta) and UreC (alpha) subunits. Three heterotrimers associate to form the active enzyme. Ni cation is required as a cofactor. Carboxylation allows a single lysine to coordinate two nickel ions.

The protein resides in the cytoplasm. The enzyme catalyses urea + 2 H2O + H(+) = hydrogencarbonate + 2 NH4(+). Its pathway is nitrogen metabolism; urea degradation; CO(2) and NH(3) from urea (urease route): step 1/1. The sequence is that of Urease subunit alpha from Roseobacter denitrificans (strain ATCC 33942 / OCh 114) (Erythrobacter sp. (strain OCh 114)).